A 485-amino-acid polypeptide reads, in one-letter code: Inosine-5'-monophosphate dehydrogenase (485 aa).

CBS domains lie at 95–154 and 155–215; these read VITN…IDDV and MTKE…AKDS. NAD(+) is bound by residues D249 and 299 to 301; that span reads GIG. 2 residues coordinate K(+): G301 and G303. Residue S304 participates in IMP binding. C306 contacts K(+). The active-site Thioimidate intermediate is C306. IMP-binding positions include 339-341, 362-363, and 386-390; these read DGG, GS, and YRGMG. R402 serves as the catalytic Proton acceptor. Position 414 (E414) interacts with IMP. The K(+) site is built by E468, S469, and H470.

The protein belongs to the IMPDH/GMPR family. In terms of assembly, homotetramer. Requires K(+) as cofactor.

The enzyme catalyses IMP + NAD(+) + H2O = XMP + NADH + H(+). It participates in purine metabolism; XMP biosynthesis via de novo pathway; XMP from IMP: step 1/1. Its activity is regulated as follows. Mycophenolic acid (MPA) is a non-competitive inhibitor that prevents formation of the closed enzyme conformation by binding to the same site as the amobile flap. In contrast, mizoribine monophosphate (MZP) is a competitive inhibitor that induces the closed conformation. MPA is a potent inhibitor of mammalian IMPDHs but a poor inhibitor of the bacterial enzymes. MZP is a more potent inhibitor of bacterial IMPDH. Its function is as follows. Catalyzes the conversion of inosine 5'-phosphate (IMP) to xanthosine 5'-phosphate (XMP), the first committed and rate-limiting step in the de novo synthesis of guanine nucleotides, and therefore plays an important role in the regulation of cell growth. This Halalkalibacterium halodurans (strain ATCC BAA-125 / DSM 18197 / FERM 7344 / JCM 9153 / C-125) (Bacillus halodurans) protein is Inosine-5'-monophosphate dehydrogenase.